Here is a 140-residue protein sequence, read N- to C-terminus: Nucleoside diphosphate kinase (140 aa).

ATP contacts are provided by Lys11, Phe59, Arg87, Thr93, Arg104, and Asn114. His117 functions as the Pros-phosphohistidine intermediate in the catalytic mechanism.

It belongs to the NDK family. Homotetramer. Requires Mg(2+) as cofactor.

The protein resides in the cytoplasm. The catalysed reaction is a 2'-deoxyribonucleoside 5'-diphosphate + ATP = a 2'-deoxyribonucleoside 5'-triphosphate + ADP. It catalyses the reaction a ribonucleoside 5'-diphosphate + ATP = a ribonucleoside 5'-triphosphate + ADP. Its function is as follows. Major role in the synthesis of nucleoside triphosphates other than ATP. The ATP gamma phosphate is transferred to the NDP beta phosphate via a ping-pong mechanism, using a phosphorylated active-site intermediate. The chain is Nucleoside diphosphate kinase from Rhodospirillum rubrum (strain ATCC 11170 / ATH 1.1.1 / DSM 467 / LMG 4362 / NCIMB 8255 / S1).